The primary structure comprises 93 residues: Small ribosomal subunit protein uS19 (93 aa).

It belongs to the universal ribosomal protein uS19 family.

In terms of biological role, protein S19 forms a complex with S13 that binds strongly to the 16S ribosomal RNA. The polypeptide is Small ribosomal subunit protein uS19 (Caldanaerobacter subterraneus subsp. tengcongensis (strain DSM 15242 / JCM 11007 / NBRC 100824 / MB4) (Thermoanaerobacter tengcongensis)).